The primary structure comprises 221 residues: Probable septum site-determining protein MinC (221 aa).

The protein belongs to the MinC family. In terms of assembly, interacts with MinD and FtsZ.

Functionally, cell division inhibitor that blocks the formation of polar Z ring septums. Rapidly oscillates between the poles of the cell to destabilize FtsZ filaments that have formed before they mature into polar Z rings. Prevents FtsZ polymerization. This chain is Probable septum site-determining protein MinC, found in Shewanella halifaxensis (strain HAW-EB4).